The following is a 599-amino-acid chain: Aspartate--tRNA(Asp/Asn) ligase (599 aa).

Glutamate 172 provides a ligand contact to L-aspartate. An aspartate region spans residues 196–199 (QLFK). Arginine 218 lines the L-aspartate pocket. ATP-binding positions include 218-220 (RDE) and glutamine 227. Histidine 455 lines the L-aspartate pocket. Glutamate 489 is an ATP binding site. Arginine 496 contributes to the L-aspartate binding site. 541-544 (GLDR) contacts ATP.

This sequence belongs to the class-II aminoacyl-tRNA synthetase family. Type 1 subfamily. In terms of assembly, homodimer.

Its subcellular location is the cytoplasm. The enzyme catalyses tRNA(Asx) + L-aspartate + ATP = L-aspartyl-tRNA(Asx) + AMP + diphosphate. Aspartyl-tRNA synthetase with relaxed tRNA specificity since it is able to aspartylate not only its cognate tRNA(Asp) but also tRNA(Asn). Reaction proceeds in two steps: L-aspartate is first activated by ATP to form Asp-AMP and then transferred to the acceptor end of tRNA(Asp/Asn). This is Aspartate--tRNA(Asp/Asn) ligase from Herminiimonas arsenicoxydans.